We begin with the raw amino-acid sequence, 257 residues long: Enterotoxin type A (257 aa).

The signal sequence occupies residues 1 to 24 (MKKTAFTLLLFIALTLTTSPLVNG). The cysteines at positions 120 and 130 are disulfide-linked. The Zn(2+) site is built by His-211, His-249, and Asp-251.

The protein belongs to the staphylococcal/streptococcal toxin family. In terms of assembly, monomer. Interacts with MHC class II molecules alpha/HLA-DRB1 and beta/HLA-DRA chains. The interaction with MHC-II molecules occurs at both zinc-dependent and zinc-independent sites. Interacts with T-cell receptor beta variable 7-9/TRBV7-9. The cofactor is Zn(2+).

Its subcellular location is the secreted. Its function is as follows. Staphylococcal enterotoxin that activates the host immune system by binding as unprocessed molecules to major histocompatibility (MHC) complex class II and T-cell receptor (TCR) molecules. In turn, waves of cellular activation, cytokine production, and migration into the lung tissue and airways occur via alphabeta T-cells. Also causes the intoxication staphylococcal food poisoning syndrome. The illness is characterized by high fever, hypotension, diarrhea, shock, and in some cases death. The polypeptide is Enterotoxin type A (entA) (Staphylococcus aureus).